Consider the following 253-residue polypeptide: Regulatory protein VirG (253 aa).

The region spanning 15–129 (HVLVIDDDVA…EFLARIRVAL (115 aa)) is the Response regulatory domain. Position 64 is a 4-aspartylphosphate (D64). Residues 141 to 241 (RRSFSFADWT…ARGAGYFFDA (101 aa)) constitute a DNA-binding region (ompR/PhoB-type).

Phosphorylated by wide host range (WHR) VirA protein.

The protein localises to the cytoplasm. Functionally, virG is required for the positive regulation of at least two vir loci encoded by the Ti plasmid of A.tumefaciens. This Agrobacterium fabrum (strain C58 / ATCC 33970) (Agrobacterium tumefaciens (strain C58)) protein is Regulatory protein VirG (virG).